Here is a 358-residue protein sequence, read N- to C-terminus: Nuclear receptor subfamily 1 group I member 3 (358 aa).

The segment at residues 18-93 is a DNA-binding region (nuclear receptor); it reads PRNCVVCGDR…VGMRKDMILS (76 aa). Residues 21 to 41 form an NR C4-type zinc finger; it reads CVVCGDRATGYHFHALTCEGC. Phosphothreonine; by PKC is present on Thr-48. The NR C4-type zinc finger occupies 57–81; the sequence is CPFAGRCEVSKAQRRHCPACRLQKC. An NR LBD domain is found at 119 to 358; it reads QQKELVQILL…MTPLLGEICS (240 aa).

It belongs to the nuclear hormone receptor family. NR1 subfamily. Heterodimer of NR1I3 and RXR. Interacts with PSMC4. Interacts with ECT2. Directly interacts with DNAJC7; this complex may also include HSP90. Interacts with CRY1. Interacts with CRY2 in a ligand-dependent manner. Phosphorylated at Thr-48 by PKC, dephosphorylation of Thr-48 is required for nuclear translocation and activation. In terms of tissue distribution, predominantly expressed in liver.

It localises to the nucleus. The protein localises to the cytoplasm. The protein resides in the cytoskeleton. Functionally, binds and transactivates the retinoic acid response elements that control expression of the retinoic acid receptor beta 2 and alcohol dehydrogenase 3 genes. Transactivates both the phenobarbital responsive element module of the human CYP2B6 gene and the CYP3A4 xenobiotic response element. In Mus musculus (Mouse), this protein is Nuclear receptor subfamily 1 group I member 3 (Nr1i3).